The chain runs to 358 residues: MATDDESFPWDQDSILSRDLLSALSPQLCYENLNRSCVRSPYSPGPRLILYAVFGFGAVLAVCGNLLVMTSILHFRQLHSPANFLVASLACADLLVGLTVMPFSMVRSVEGCWYFGDSYCKLHTSFDMSFCCSSLLHLCFISVDRYIAVSDPLIYPIRFTASVSGKCITFSWFLSIIYGFSLIYTGASEAGLKDLVSALSCVGGCQIPMNQSCVLINFLLFLVPTLVMMTVYSKIFLIAKQQAQNMEKMSKQTTRASDSYKDRVAKRERKAAKTLGIAVAAFLLSWLPYLIDSIIDAFLGFITPSYVYEILVWIVYYNSAMNPLIYAFFYPWFRNAIKLIVTGKILKQNSSTTNLFSE.

Over 1-47 (MATDDESFPWDQDSILSRDLLSALSPQLCYENLNRSCVRSPYSPGPR) the chain is Extracellular. Residue asparagine 34 is glycosylated (N-linked (GlcNAc...) asparagine). Disulfide bonds link cysteine 37–cysteine 201 and cysteine 120–cysteine 205. A helical transmembrane segment spans residues 48–68 (LILYAVFGFGAVLAVCGNLLV). Residues 69–83 (MTSILHFRQLHSPAN) lie on the Cytoplasmic side of the membrane. Residues 84-104 (FLVASLACADLLVGLTVMPFS) traverse the membrane as a helical segment. The Extracellular segment spans residues 105–125 (MVRSVEGCWYFGDSYCKLHTS). A helical transmembrane segment spans residues 126-143 (FDMSFCCSSLLHLCFISV). Topologically, residues 144–166 (DRYIAVSDPLIYPIRFTASVSGK) are cytoplasmic. Residues 167-187 (CITFSWFLSIIYGFSLIYTGA) form a helical membrane-spanning segment. Residues 188-217 (SEAGLKDLVSALSCVGGCQIPMNQSCVLIN) lie on the Extracellular side of the membrane. The N-linked (GlcNAc...) asparagine glycan is linked to asparagine 210. A helical membrane pass occupies residues 218-238 (FLLFLVPTLVMMTVYSKIFLI). The Cytoplasmic portion of the chain corresponds to 239–274 (AKQQAQNMEKMSKQTTRASDSYKDRVAKRERKAAKT). Residues 275–295 (LGIAVAAFLLSWLPYLIDSII) traverse the membrane as a helical segment. Over 296-309 (DAFLGFITPSYVYE) the chain is Extracellular. The chain crosses the membrane as a helical span at residues 310–333 (ILVWIVYYNSAMNPLIYAFFYPWF). Over 334-358 (RNAIKLIVTGKILKQNSSTTNLFSE) the chain is Cytoplasmic.

Belongs to the G-protein coupled receptor 1 family.

The protein resides in the cell membrane. In terms of biological role, olfactory receptor specific for N,N-dimethylalkylamines trace amines. Trace amine compounds are enriched in animal body fluids and act on trace amine-associated receptors (TAARs) to elicit both intraspecific and interspecific innate behaviors. Ligand-binding causes a conformation change that triggers signaling via G(s)-class of G alpha proteins (GNAL or GNAS). The sequence is that of Trace amine-associated receptor 7h from Rattus norvegicus (Rat).